A 122-amino-acid polypeptide reads, in one-letter code: Large ribosomal subunit protein uL18 (122 aa).

Residues 1–19 are compositionally biased toward basic residues; the sequence is MSTLSRKQKTQKRHKRLRR. Residues 1–26 form a disordered region; it reads MSTLSRKQKTQKRHKRLRRNLSGTDQ.

The protein belongs to the universal ribosomal protein uL18 family. As to quaternary structure, part of the 50S ribosomal subunit; part of the 5S rRNA/L5/L18/L25 subcomplex. Contacts the 5S and 23S rRNAs.

Its function is as follows. This is one of the proteins that bind and probably mediate the attachment of the 5S RNA into the large ribosomal subunit, where it forms part of the central protuberance. In Prochlorococcus marinus (strain SARG / CCMP1375 / SS120), this protein is Large ribosomal subunit protein uL18.